The primary structure comprises 1382 residues: MKAPAVLAPGILVLLFTLVQKSYGECREALVKSEMNVNMKYQLPNFTAETPIQNVVLHKHHIYLGAVNYIYVLNDKDLQKVAEYKTGPVLEHPDCFPCQDCSHKANLSGGVWKDNINMALLIDTYYDDQLISCGSVHRGTCQRHVLPPSNTADILSKVHCMYSPQADEESSHCPDCVVSALGTKVLISEKGRFINFFVGNTINSSYLTDHSLHSISVRRLKETQDGFKFLTDQSYIDVLPEFRDSYPIKYIHAFESNRFIYFLTVQRETLDAQTFHTRIIRFCSVDSGLHSYMEMPLECILTEKRRKRSTREEVFNILQAAYVSKPGAHLAKQIGANLNDDILYGVFAQSKPDSAEPMNRSAVCAFPIKYVNEFFNKIVNKNNVRCLQHFYGPNHEHCFNRTLLRNSSGCEVRSDEYRTEFTTALQRVDLFMGQFNQVLLTSISTFIKGDLTIANLGTSEGRFMQVVVSRSGSSTPHVNFRLDSHPVSSEAIVEHPLNQNGYTLVVTGKKITKIPLNGLGCEHFQSCSQCLSAPPFVQCGWCHDKCVQLEECPSGTWTQEICLPTIYEVFPTSAPLEGGTMLTVCGWDFGFRRNNKFDLKKTRVFLGNESCTLTLSESTTNMLKCTVGPAVNEHFNISIIISNGRGTAQYSTFSYVDPVITSIFPSYGPKTGGTLLTLTGKYLNSGNSRHISIGGKTCTLKSVSDSILECYTPAQTIPTEFPIKLKIDLANREMNSFSYQEDPIVYAIHPTKSFISGGSTITAVGKNLNSVSVLRMVISVHETRRNFTVACHHRSNSEIICCTTPSLQQLNLQLPLKTKAFFMLDGIHSKYFDLIYVHNPVFKPFEKPVMISIGNENVLEIKGNDIDPEAVKGEVLKVGNKSCETIYSDSEAVLCKVPNDLLKLNNELNIEWKQAVSSTILGKVIVQPDQNFTGLIVGVISISIILLLLLGVFLWLKKRKQIKDLGSELVRYDARVHTPHLDRLVSARSVSPTTEMVSNESVDYRATFPEDQFPNSSQNGSCRQVQYPLTDLSPMLNSGDSDISSPLLQNTVHIDLSALNPELVQAVQHVVIGPSSLIVHFNEVIGRGHFGCVYHGTLLDSDDKKIHCAVKSLNRITDIGEVSQFLTEGIIMKDFSHPNVLSLLGICLRSEGSPLVVLPYMKHGDLRNFIRNETHNPTVKDLIGFGLQVAKGMKYLASKKFVHRDLAARNCMLDEKFTVKVADFGLARDMYDKEYYSVHNKTGAKLPVKWMALESLQTQKFTTKSDVWSFGVLLWELMTRGAPPYPDVNTFDITVYLLQGRRLLQPEYCPDPLYEVMLKCWHPKAELRPSFSELVSRISAIFSTFIGEHYVHVNATYVNVKCVAPYPSLLSSQDNIDGEGDT.

Residues 1–24 (MKAPAVLAPGILVLLFTLVQKSYG) form the signal peptide. The Extracellular portion of the chain corresponds to 25–933 (ECREALVKSE…VIVQPDQNFT (909 aa)). The 490-residue stretch at 27 to 516 (REALVKSEMN…TGKKITKIPL (490 aa)) folds into the Sema domain. N-linked (GlcNAc...) asparagine glycosylation is present at Asn-45. 4 disulfides stabilise this stretch: Cys-95–Cys-101, Cys-98–Cys-160, Cys-133–Cys-141, and Cys-173–Cys-176. Asn-106 is a glycosylation site (N-linked (GlcNAc...) asparagine). N-linked (GlcNAc...) asparagine glycans are attached at residues Asn-203 and Asn-359. 2 cysteine pairs are disulfide-bonded: Cys-299–Cys-364 and Cys-386–Cys-398. N-linked (GlcNAc...) asparagine glycosylation is found at Asn-400 and Asn-406. Disulfide bonds link Cys-521–Cys-539, Cys-527–Cys-562, Cys-530–Cys-546, and Cys-542–Cys-552. IPT/TIG domains follow at residues 564-656 (PTIY…FSYV), 658-740 (PVIT…FSYQ), and 743-837 (PIVY…LIYV). An O-linked (Man) threonine glycan is attached at Thr-583. Residues Asn-608 and Asn-636 are each glycosylated (N-linked (GlcNAc...) asparagine). O-linked (Man) threonine glycosylation is found at Thr-677 and Thr-762. Asn-786, Asn-880, and Asn-931 each carry an N-linked (GlcNAc...) asparagine glycan. A helical membrane pass occupies residues 934–956 (GLIVGVISISIILLLLLGVFLWL). The Cytoplasmic portion of the chain corresponds to 957–1382 (KKRKQIKDLG…QDNIDGEGDT (426 aa)). Ser-967 bears the Phosphoserine mark. The residue at position 978 (Thr-978) is a Phosphothreonine. Phosphoserine is present on residues Ser-991, Ser-998, and Ser-1001. Phosphotyrosine is present on Tyr-1004. In terms of domain architecture, Protein kinase spans 1079 to 1346 (VHFNEVIGRG…RISAIFSTFI (268 aa)). Residues 1085 to 1093 (IGRGHFGCV) and Lys-1111 each bind ATP. The active-site Proton acceptor is Asp-1205. Residues 1213 to 1382 (LDEKFTVKVA…QDNIDGEGDT (170 aa)) are interaction with RANBP9. Tyr-1231 is subject to Phosphotyrosine. Phosphotyrosine; by autocatalysis is present on residues Tyr-1235 and Tyr-1236. Thr-1290 is modified (phosphothreonine). The interaction with MUC20 stretch occupies residues 1321–1360 (WHPKAELRPSFSELVSRISAIFSTFIGEHYVHVNATYVNV). Phosphotyrosine; by autocatalysis occurs at positions 1350 and 1357. Tyr-1366 is modified (phosphotyrosine).

This sequence belongs to the protein kinase superfamily. Tyr protein kinase family. In terms of assembly, heterodimer made of an alpha chain (50 kDa) and a beta chain (145 kDa) which are disulfide linked. Binds PLXNB1. Interacts when phosphorylated with downstream effectors including STAT3, PIK3R1, SRC, PCLG1, GRB2 and GAB1. Interacts with SPSB1, SPSB2 and SPSB4. Interacts with INPP5D/SHIP1. When phosphorylated at Tyr-1357, interacts with INPPL1/SHIP2. Interacts with RANBP9 and RANBP10, as well as SPSB1, SPSB2, SPSB3 and SPSB4. SPSB1 binding occurs in the presence and in the absence of HGF, however HGF treatment has a positive effect on this interaction. Interacts with MUC20; prevents interaction with GRB2 and suppresses hepatocyte growth factor-induced cell proliferation. Interacts with GRB10. Interacts with PTPN1 and PTPN2. Interacts with HSP90AA1 and HSP90AB1; the interaction suppresses MET kinase activity. Interacts with tensin TNS3. Interacts (when phosphorylated) with tensin TNS4 (via SH2 domain); the interaction increases MET protein stability by inhibiting MET endocytosis and subsequent lysosomal degradation. Autophosphorylated in response to ligand binding on Tyr-1235 and Tyr-1236 in the kinase domain leading to further phosphorylation of Tyr-1350 and Tyr-1357 in the C-terminal multifunctional docking site. Dephosphorylated by PTPRJ at Tyr-1350 and Tyr-1366. Dephosphorylated by PTPN1 and PTPN2. In terms of processing, ubiquitinated. Ubiquitination by CBL regulates the receptor stability and activity through proteasomal degradation. Post-translationally, O-mannosylation of IPT/TIG domains by TMEM260 is required for protein maturation. O-mannosylated residues are composed of single mannose glycans that are not elongated or modified.

It is found in the membrane. It catalyses the reaction L-tyrosyl-[protein] + ATP = O-phospho-L-tyrosyl-[protein] + ADP + H(+). Its activity is regulated as follows. In its inactive state, the C-terminal tail interacts with the catalytic domain and inhibits the kinase activity. Upon ligand binding, the C-terminal tail is displaced and becomes phosphorylated, thus increasing the kinase activity. Its function is as follows. Receptor tyrosine kinase that transduces signals from the extracellular matrix into the cytoplasm by binding to hepatocyte growth factor/HGF ligand. Regulates many physiological processes including proliferation, scattering, morphogenesis and survival. Ligand binding at the cell surface induces autophosphorylation of MET on its intracellular domain that provides docking sites for downstream signaling molecules. Following activation by ligand, interacts with the PI3-kinase subunit PIK3R1, PLCG1, SRC, GRB2, STAT3 or the adapter GAB1. Recruitment of these downstream effectors by MET leads to the activation of several signaling cascades including the RAS-ERK, PI3 kinase-AKT, or PLCgamma-PKC. The RAS-ERK activation is associated with the morphogenetic effects while PI3K/AKT coordinates prosurvival effects. During embryonic development, MET signaling plays a role in gastrulation, development and migration of muscles and neuronal precursors, angiogenesis and kidney formation. In adults, participates in wound healing as well as organ regeneration and tissue remodeling. Also promotes differentiation and proliferation of hematopoietic cells. This is Hepatocyte growth factor receptor (MET) from Felis catus (Cat).